The sequence spans 83 residues: uncharacterized protein (83 aa).

2 helical membrane passes run 11 to 31 (FYCI…SFLL) and 48 to 68 (WHNL…HIWM).

The protein resides in the cell membrane. This is an uncharacterized protein from Bacillus subtilis (strain 168).